The following is a 337-amino-acid chain: uncharacterized protein (337 aa).

Helical transmembrane passes span 4–24 (FIFF…FSLI) and 26–46 (LLLW…LFVL).

It belongs to the plectrovirus ORF2 family.

Its subcellular location is the host membrane. This is an uncharacterized protein from Spiroplasma virus SpV1-R8A2 B (SpV1).